The sequence spans 478 residues: Putrescine oxidase (478 aa).

An FAD-binding site is contributed by 15 to 70; it reads RDVVVVGAGPAGLMAARTLVAAGRTVAVLEARDRVGGRTWSKTVDGAFLEIGGQWI.

This sequence belongs to the flavin monoamine oxidase family. Requires FAD as cofactor.

The enzyme catalyses putrescine + O2 + H2O = 4-aminobutanal + H2O2 + NH4(+). In Kocuria rosea (Deinococcus erythromyxa), this protein is Putrescine oxidase (puo).